Here is an 87-residue protein sequence, read N- to C-terminus: DNA/RNA-binding protein Alba (87 aa).

At Lys-9 the chain carries N6-acetyllysine.

Belongs to the histone-like Alba family. Post-translationally, acetylated. Acetylation at Lys-9 decreases DNA-binding affinity.

It is found in the cytoplasm. Its subcellular location is the chromosome. Its function is as follows. Binds double-stranded DNA tightly but without sequence specificity. Involved in DNA compaction. The chain is DNA/RNA-binding protein Alba from Methanocaldococcus jannaschii (strain ATCC 43067 / DSM 2661 / JAL-1 / JCM 10045 / NBRC 100440) (Methanococcus jannaschii).